We begin with the raw amino-acid sequence, 185 residues long: Protein LURP-one-related 13 (185 aa).

This sequence belongs to the LOR family.

Might be related to the phospholipid scramblase and tubby-like superfamily of membrane tethered transcription factors. This is Protein LURP-one-related 13 from Arabidopsis thaliana (Mouse-ear cress).